Here is a 417-residue protein sequence, read N- to C-terminus: Squalene synthase (417 aa).

NADP(+)-binding residues include arginine 52 and arginine 77. 3 residues coordinate Mg(2+): aspartate 80, glutamate 83, and aspartate 84. Arginine 218 contributes to the NADP(+) binding site. The chain crosses the membrane as a helical span at residues 284-304; that stretch reads SIFNFCAIPQVMAIATLAACY. NADP(+) contacts are provided by lysine 315 and arginine 317. The helical transmembrane segment at 384–404 threads the bilayer; that stretch reads PIYLSFVMLLAALSWQYLSTL.

The protein belongs to the phytoene/squalene synthase family. The cofactor is Mg(2+).

It is found in the endoplasmic reticulum membrane. The enzyme catalyses 2 (2E,6E)-farnesyl diphosphate + NADPH + H(+) = squalene + 2 diphosphate + NADP(+). The catalysed reaction is 2 (2E,6E)-farnesyl diphosphate + NADH + H(+) = squalene + 2 diphosphate + NAD(+). It catalyses the reaction presqualene diphosphate + NADH + H(+) = squalene + diphosphate + NAD(+). It carries out the reaction presqualene diphosphate + NADPH + H(+) = squalene + diphosphate + NADP(+). The enzyme catalyses 2 (2E,6E)-farnesyl diphosphate = presqualene diphosphate + diphosphate. Its pathway is terpene metabolism; lanosterol biosynthesis; lanosterol from farnesyl diphosphate: step 1/3. In terms of biological role, catalyzes the condensation of 2 farnesyl pyrophosphate (FPP) moieties to form squalene. Proceeds in two distinct steps. In the first half-reaction, two molecules of FPP react to form the stable presqualene diphosphate intermediate (PSQPP), with concomitant release of a proton and a molecule of inorganic diphosphate. In the second half-reaction, PSQPP undergoes heterolysis, isomerization, and reduction with NADPH or NADH to form squalene. It is the first committed enzyme of the sterol biosynthesis pathway. The polypeptide is Squalene synthase (FDFT1) (Bos taurus (Bovine)).